The chain runs to 691 residues: Elongation factor G (691 aa).

The region spanning 8–282 is the tr-type G domain; sequence EKTRNIGIMA…AVVDYLPSPV (275 aa). GTP is bound by residues 17–24, 81–85, and 135–138; these read AHIDAGKT, DTPGH, and NKMD.

The protein belongs to the TRAFAC class translation factor GTPase superfamily. Classic translation factor GTPase family. EF-G/EF-2 subfamily.

Its subcellular location is the cytoplasm. Its function is as follows. Catalyzes the GTP-dependent ribosomal translocation step during translation elongation. During this step, the ribosome changes from the pre-translocational (PRE) to the post-translocational (POST) state as the newly formed A-site-bound peptidyl-tRNA and P-site-bound deacylated tRNA move to the P and E sites, respectively. Catalyzes the coordinated movement of the two tRNA molecules, the mRNA and conformational changes in the ribosome. This is Elongation factor G from Caldicellulosiruptor saccharolyticus (strain ATCC 43494 / DSM 8903 / Tp8T 6331).